The chain runs to 290 residues: 4-hydroxybenzoate octaprenyltransferase (290 aa).

8 helical membrane passes run 23–43, 46–66, 99–119, 141–161, 163–183, 213–233, 234–254, and 268–288; these read IGAL…TPGV, LWIL…GCVV, LFVV…TMTI, LPQV…FAAV, ESVP…AVAY, LIIG…GELN, GLGW…VYQQ, and AFMN…MSYW.

It belongs to the UbiA prenyltransferase family. The cofactor is Mg(2+).

The protein resides in the cell inner membrane. It catalyses the reaction all-trans-octaprenyl diphosphate + 4-hydroxybenzoate = 4-hydroxy-3-(all-trans-octaprenyl)benzoate + diphosphate. The protein operates within cofactor biosynthesis; ubiquinone biosynthesis. Its function is as follows. Catalyzes the prenylation of para-hydroxybenzoate (PHB) with an all-trans polyprenyl group. Mediates the second step in the final reaction sequence of ubiquinone-8 (UQ-8) biosynthesis, which is the condensation of the polyisoprenoid side chain with PHB, generating the first membrane-bound Q intermediate 3-octaprenyl-4-hydroxybenzoate. This chain is 4-hydroxybenzoate octaprenyltransferase, found in Escherichia coli O6:K15:H31 (strain 536 / UPEC).